The sequence spans 411 residues: Translation initiation factor 2 subunit gamma (411 aa).

The tr-type G domain occupies 9–201 (QPTVNIGMVG…AIEKYIPTPE (193 aa)). Residues 18 to 25 (GHVDHGKS) are G1. Mg(2+) is bound by residues aspartate 21, serine 25, glycine 46, and serine 48. GTP is bound at residue 21-26 (DHGKST). Residues 46-50 (GISIK) form a G2 region. Positions 88 to 91 (DAPG) are G3. GTP is bound by residues 144 to 147 (NKID) and 179 to 181 (SAY). The interval 144-147 (NKID) is G4. The tract at residues 179 to 181 (SAY) is G5.

Belongs to the TRAFAC class translation factor GTPase superfamily. Classic translation factor GTPase family. EIF2G subfamily. As to quaternary structure, heterotrimer composed of an alpha, a beta and a gamma chain. The cofactor is Mg(2+).

It catalyses the reaction GTP + H2O = GDP + phosphate + H(+). Its function is as follows. eIF-2 functions in the early steps of protein synthesis by forming a ternary complex with GTP and initiator tRNA. The polypeptide is Translation initiation factor 2 subunit gamma (Thermoplasma volcanium (strain ATCC 51530 / DSM 4299 / JCM 9571 / NBRC 15438 / GSS1)).